A 176-amino-acid polypeptide reads, in one-letter code: Pituitary adenylate cyclase-activating polypeptide (176 aa).

A signal peptide spans 1-24 (MTMCSGARLALLVYGILMHSSVYG). A propeptide spanning residues 25 to 80 (SPAASGLRFPGIRPENEVYDEDGNPQQDFYDSESLGVGSPASALRDAYALYYPAEE) is cleaved from the precursor. The tract at residues 98–135 (QPSARRSPADAHGQGLGWDPGGSADDDSEPLSKRHSDG) is disordered. Positions 150–158 (VKKYLAAVL) are important for receptor binding. L158 is subject to Leucine amide. The residue at position 169 (K169) is a Lysine amide. Positions 173-176 (IPYL) are excised as a propeptide.

It belongs to the glucagon family. In terms of assembly, interacts with ADCYAP1R1 (via N-terminal extracellular domain); both PACAP27 and PACAP38 neuropeptides function as ligand for the ADCYAP1R1 receptor, which modulates the activity of downstream effectors. Interacts with VIPR1 and VIPR2; functions as ligand for VIPR1 and VIPR2 receptors, which modulate the activity of downstream effectors.

The protein resides in the secreted. Its function is as follows. PACAP is a neuropeptide involved in diverse array of physiological processes through activating the PACAP subfamily of class B1 G protein-coupled receptors: VIP receptor 1 (VIPR1), VIP receptor 2 (VIPR2), and PACAP type I receptor (ADCYAP1R1). Exerts neuroprotective and general cytoprotective effects due to anti-apoptotic, anti-inflammatory, and antioxidant actions. Promotes neuron projection development through the RAPGEF2/Rap1/B-Raf/ERK pathway. In chromaffin cells, induces long-lasting increase of intracellular calcium concentrations and neuroendocrine secretion. Involved in the control of glucose homeostasis, induces insulin secretion by pancreatic beta cells. PACAP exists in two bioactive forms from proteolysis of the same precursor protein, PACAP27 and PACAP38, which differ by eleven amino acid residues in the C-terminus. The chain is Pituitary adenylate cyclase-activating polypeptide (ADCYAP1) from Bos taurus (Bovine).